The following is a 660-amino-acid chain: Bifunctional polymyxin resistance protein ArnA (660 aa).

The tract at residues 1 to 304 (MKTVVFAYHD…TLGLVQGSRL (304 aa)) is formyltransferase ArnAFT. A (6R)-10-formyltetrahydrofolate-binding site is contributed by 86–88 (HLI). His-104 serves as the catalytic Proton donor; for formyltransferase activity. (6R)-10-formyltetrahydrofolate contacts are provided by residues Arg-114 and 136-140 (VKRAD). Residues 314-660 (RRTRVLILGV…RTVDLTDKPS (347 aa)) are dehydrogenase ArnADH. Residues Asp-347 and 368–369 (DI) contribute to the NAD(+) site. Residues Ala-393, Tyr-398, and 432-433 (TS) contribute to the UDP-alpha-D-glucuronate site. The active-site Proton acceptor; for decarboxylase activity is the Glu-434. UDP-alpha-D-glucuronate is bound by residues Arg-460, Asn-492, 526 to 535 (KLIDGGKQKR), and Tyr-613. Residue Arg-619 is the Proton donor; for decarboxylase activity of the active site.

In the N-terminal section; belongs to the Fmt family. UDP-L-Ara4N formyltransferase subfamily. This sequence in the C-terminal section; belongs to the NAD(P)-dependent epimerase/dehydratase family. UDP-glucuronic acid decarboxylase subfamily. In terms of assembly, homohexamer, formed by a dimer of trimers.

It carries out the reaction UDP-alpha-D-glucuronate + NAD(+) = UDP-beta-L-threo-pentopyranos-4-ulose + CO2 + NADH. The enzyme catalyses UDP-4-amino-4-deoxy-beta-L-arabinose + (6R)-10-formyltetrahydrofolate = UDP-4-deoxy-4-formamido-beta-L-arabinose + (6S)-5,6,7,8-tetrahydrofolate + H(+). The protein operates within nucleotide-sugar biosynthesis; UDP-4-deoxy-4-formamido-beta-L-arabinose biosynthesis; UDP-4-deoxy-4-formamido-beta-L-arabinose from UDP-alpha-D-glucuronate: step 1/3. It functions in the pathway nucleotide-sugar biosynthesis; UDP-4-deoxy-4-formamido-beta-L-arabinose biosynthesis; UDP-4-deoxy-4-formamido-beta-L-arabinose from UDP-alpha-D-glucuronate: step 3/3. Its pathway is bacterial outer membrane biogenesis; lipopolysaccharide biosynthesis. In terms of biological role, bifunctional enzyme that catalyzes the oxidative decarboxylation of UDP-glucuronic acid (UDP-GlcUA) to UDP-4-keto-arabinose (UDP-Ara4O) and the addition of a formyl group to UDP-4-amino-4-deoxy-L-arabinose (UDP-L-Ara4N) to form UDP-L-4-formamido-arabinose (UDP-L-Ara4FN). The modified arabinose is attached to lipid A and is required for resistance to polymyxin and cationic antimicrobial peptides. The polypeptide is Bifunctional polymyxin resistance protein ArnA (Escherichia coli O6:H1 (strain CFT073 / ATCC 700928 / UPEC)).